The primary structure comprises 347 residues: Aspartate-semialdehyde dehydrogenase (347 aa).

Residues 13-16 (TGAV) and 41-42 (RS) each bind NADP(+). Position 101 (R101) interacts with phosphate. The active-site Acyl-thioester intermediate is the C132. Position 159 (Q159) interacts with substrate. Residue 162–163 (SG) participates in NADP(+) binding. K216 contributes to the phosphate binding site. R238 provides a ligand contact to substrate. H245 functions as the Proton acceptor in the catalytic mechanism. N319 provides a ligand contact to NADP(+).

It belongs to the aspartate-semialdehyde dehydrogenase family. In terms of assembly, homodimer.

It carries out the reaction L-aspartate 4-semialdehyde + phosphate + NADP(+) = 4-phospho-L-aspartate + NADPH + H(+). The protein operates within amino-acid biosynthesis; L-lysine biosynthesis via DAP pathway; (S)-tetrahydrodipicolinate from L-aspartate: step 2/4. It participates in amino-acid biosynthesis; L-methionine biosynthesis via de novo pathway; L-homoserine from L-aspartate: step 2/3. Its pathway is amino-acid biosynthesis; L-threonine biosynthesis; L-threonine from L-aspartate: step 2/5. Its function is as follows. Catalyzes the NADPH-dependent formation of L-aspartate-semialdehyde (L-ASA) by the reductive dephosphorylation of L-aspartyl-4-phosphate. The protein is Aspartate-semialdehyde dehydrogenase of Legionella pneumophila.